A 1337-amino-acid chain; its full sequence is uncharacterized protein (1337 aa).

Disordered stretches follow at residues 1–94 and 119–174; these read MPTS…QSSA and ARDI…PSFF. Low complexity-rich tracts occupy residues 18–37 and 68–79; these read SNTS…ASGS and SSTHFQSSHSVS. Polar residues predominate over residues 80-94; that stretch reads NAHNQSPLNQSQSSA. Over residues 123-147 the composition is skewed to low complexity; sequence PQQPSHSQNPSSSSSSSSSQSSQHS. Over residues 157–167 the composition is skewed to basic and acidic residues; sequence NEKKSLDDPSP. The next 6 membrane-spanning stretches (helical) occupy residues 209-229, 241-261, 267-287, 328-348, 361-381, and 387-407; these read GLKP…LVLA, FFVV…PMLW, FLLL…ATVA, VRPL…ALFI, CVFS…YPYF, and LFFI…TLFI. Disordered stretches follow at residues 623-662 and 868-894; these read SHVR…SHKS and YDEN…DADH. A compositionally biased stretch (polar residues) spans 626–644; sequence RTGSNNSEAPLAAKTSTTK. Positions 868–880 are enriched in basic and acidic residues; the sequence is YDENIHNDVDKDM. Transmembrane regions (helical) follow at residues 917-937, 975-995, 997-1017, 1021-1041, 1066-1086, and 1275-1295; these read MNVF…PAFC, IFGT…GSGH, LGNA…IQFI, FVIL…LTVT, FLTV…PQPR, and FAVG…IMFI.

It is found in the membrane. This is an uncharacterized protein from Schizosaccharomyces pombe (strain 972 / ATCC 24843) (Fission yeast).